Consider the following 195-residue polypeptide: 3-isopropylmalate dehydratase small subunit (195 aa).

Belongs to the LeuD family. LeuD type 1 subfamily. In terms of assembly, heterodimer of LeuC and LeuD.

It carries out the reaction (2R,3S)-3-isopropylmalate = (2S)-2-isopropylmalate. It functions in the pathway amino-acid biosynthesis; L-leucine biosynthesis; L-leucine from 3-methyl-2-oxobutanoate: step 2/4. Catalyzes the isomerization between 2-isopropylmalate and 3-isopropylmalate, via the formation of 2-isopropylmaleate. This Salinispora arenicola (strain CNS-205) protein is 3-isopropylmalate dehydratase small subunit.